We begin with the raw amino-acid sequence, 205 residues long: MWRMRGGATRRGSCGGEGGGSRGESGRLGRAREGGGGGGGVGWRGRAGGARRQLEERFADLAASHLEALRARDERDRQNARLREENARLRLENRRLRRENRSLFRQALRLPGDSGEREAAVETLAPDEPATNRKARGHGREEEPGSPRALRARLEKLEVMYRRALLQLHLEQQGARPPGAIEEPPLQETATGLCAHDPDVPRPWL.

A compositionally biased stretch (low complexity) spans Met1–Gly12. Residues Met1–Gly49 form a disordered region. The span at Ser13–Gly23 shows a compositional bias: gly residues. Basic and acidic residues predominate over residues Glu24–Glu33. The span at Gly34–Gly48 shows a compositional bias: gly residues. Residues Leu66–Leu110 are a coiled coil. Disordered stretches follow at residues Asp113–Ala149 and Gly174–Leu205. Phosphoserine is present on Ser146. Over residues His196–Leu205 the composition is skewed to basic and acidic residues.

The chain is Tumor suppressor candidate gene 1 protein homolog (Tusc1) from Mus musculus (Mouse).